The sequence spans 3174 residues: Probable polyketide synthase 15 (3174 aa).

Residues 23–474 (NDEIAIVGIG…GSNCCLILSQ (452 aa)) enclose the Ketosynthase family 3 (KS3) domain. Catalysis depends on for beta-ketoacyl synthase activity residues Cys-194, His-342, and His-397. 2 coiled-coil regions span residues 472 to 509 (LSQF…QYDN) and 574 to 604 (EFNK…RVQT). Basic and acidic residues predominate over residues 578 to 599 (QKQSQKEKEKEKEREGEEKEQL). The segment at 578 to 601 (QKQSQKEKEKEKEREGEEKEQLNR) is disordered. The tract at residues 707-740 (GIEASFIVGHSLGEIPAAYCSGMITLDTLCYLIY) is acyl/malonyl transferase. Ser-717 acts as the For acyl/malonyl transferase activity in catalysis. Residues 1034 to 1156 (IDILGLSNYD…ANFQLLNNNN (123 aa)) are N-terminal hotdog fold. The region spanning 1034–1332 (IDILGLSNYD…CKSLKIVKNP (299 aa)) is the PKS/mFAS DH domain. The active-site Proton acceptor; for dehydratase activity is His-1068. Residues 1182–1332 (NKTKISRIDL…CKSLKIVKNP (151 aa)) form a C-terminal hotdog fold region. The Proton donor; for dehydratase activity role is filled by Asp-1241. Positions 1758-1793 (LEININNNNNNNNNNNNNNNNNNNNNNNNNNYEDNV) form a coiled coil. Residues 2653-2730 (VDSLNIKDIF…LVIKIIITAI (78 aa)) form the Carrier domain. At Ser-2690 the chain carries O-(pantetheine 4'-phosphoryl)serine.

Requires pantetheine 4'-phosphate as cofactor.

Functionally, probable polyketide synthase. The chain is Probable polyketide synthase 15 (pks15) from Dictyostelium discoideum (Social amoeba).